Consider the following 149-residue polypeptide: Hut operon positive regulatory protein (149 aa).

Belongs to the HutP family. Homohexamer.

Antiterminator that binds to cis-acting regulatory sequences on the mRNA in the presence of histidine, thereby suppressing transcription termination and activating the hut operon for histidine utilization. This is Hut operon positive regulatory protein from Geobacillus thermodenitrificans (strain NG80-2).